A 175-amino-acid polypeptide reads, in one-letter code: B9 domain-containing protein 2 (175 aa).

Residues 2 to 118 form the C2 B9-type domain; sequence AEVHVIGQIM…DCPTWRPLGS (117 aa).

This sequence belongs to the B9D family. Part of the tectonic-like complex (also named B9 complex). Interacts with TUBG1.

Its subcellular location is the cytoplasm. It localises to the cytoskeleton. The protein localises to the cilium basal body. The protein resides in the cilium axoneme. It is found in the nucleus. Component of the tectonic-like complex, a complex localized at the transition zone of primary cilia and acting as a barrier that prevents diffusion of transmembrane proteins between the cilia and plasma membranes. In Bos taurus (Bovine), this protein is B9 domain-containing protein 2 (B9D2).